The sequence spans 288 residues: Polyamine aminopropyltransferase (288 aa).

The region spanning 9 to 238 (ETLHDQFGQY…GIMTFAWATD (230 aa)) is the PABS domain. Q33 provides a ligand contact to S-methyl-5'-thioadenosine. Residues H64 and D88 each coordinate spermidine. Residues E108 and 140 to 141 (DG) each bind S-methyl-5'-thioadenosine. The Proton acceptor role is filled by D158. Residue 158–161 (DCTD) coordinates spermidine. Position 165 (P165) interacts with S-methyl-5'-thioadenosine.

This sequence belongs to the spermidine/spermine synthase family. Homodimer or homotetramer.

It localises to the cytoplasm. The catalysed reaction is S-adenosyl 3-(methylsulfanyl)propylamine + putrescine = S-methyl-5'-thioadenosine + spermidine + H(+). Its pathway is amine and polyamine biosynthesis; spermidine biosynthesis; spermidine from putrescine: step 1/1. Its function is as follows. Catalyzes the irreversible transfer of a propylamine group from the amino donor S-adenosylmethioninamine (decarboxy-AdoMet) to putrescine (1,4-diaminobutane) to yield spermidine. The chain is Polyamine aminopropyltransferase from Escherichia coli O81 (strain ED1a).